Here is a 1010-residue protein sequence, read N- to C-terminus: MEGFAKPSTSSGSGVTVRASVAAASIEERFADLCKAKLGLDESTTRQAMQLLKETNNILKSSMSSLGGGSPEEIERFWSACVLYCVSRLSKAGRSKEDGSVSLCQILRASKLNIVDFFKEMPQFCIKVAHILTGLYGSDWEKRLELKELQANVVHLSLLSSYYKRAYQELFLSNDGKSSDNSSESNNQEASDYYRFGWLLFLVLRIQTFSRFKDLVTSTNELVSVLAVLIIHVPVRLRNFDIKDSSYFGKKSDRGVSLIASLCEKHHTSEDELSKALEKTNTLIMDILKKKPCPATSACQQDNLSFIDPEGLTVFKDLLQGDSLKPSLIILEKEYENAINTKGELDERMFANDEDSLLGSGSLSGGAINLPGTKRKYDVMASPAKSISSPNPMSPPRFCLSPKGNGFCNSKMAPSTPVSTAMTTAKWLRNTVSPLPSRPSGELLRFFSACDKDLTDDIAHRAGIILGAIFTSSSFGERICTSMRSASRMDAIWTEQRKMEALKLYYRVLESMCRAESQILSGNNLTSLLSNERFHRCMIACSAELVLATHKTVTMMFPAVLEKTGITAFDLSKVIEGFVRHEDTLPRELKRHLNSLEERLLESMAWEKGSSMYNSLIVARPALSVEISRLGLLAEPMPSLDAIAAHHNISLGGLPPLPFQKQERLQDKDEVRSPKRACTERRNVLVDSNSLRSPVKDIIKPKLPPLQSAFASPTRPNPAAGGETCAETGIGVFFSKISKLAAIRIRSLCERLQLPQQVLERVYSLVQQILSQQTGLFFNRHIDQIILCSIYGVAKISQLELSFKEIIFGYRKQPQCKPQVFRSVYVHWPPRSRNGKTGEDHVDIITFYNEVFIPAVKSLLVEVGPGASASPKKKEEEKGPADVGPFPESPRLARFPNLPDMSPKKVSATHNVYVSPLRSSKMDTLLSPSSKSYYACVGESTYAFQSPSKDLKAINNRLNSVSGGKKVSGRLNFDVVSDLVVASSLGSDRDAKPAADPAKTTPVKCEPSDS.

A domain A region spans residues 416–616 (TPVSTAMTTA…EKGSSMYNSL (201 aa)). Residues 416–858 (TPVSTAMTTA…NEVFIPAVKS (443 aa)) form a pocket region. Positions 617–727 (IVARPALSVE…PAAGGETCAE (111 aa)) are spacer. Residues 728–858 (TGIGVFFSKI…NEVFIPAVKS (131 aa)) form a domain B region. Disordered stretches follow at residues 867 to 889 (ASAS…FPES) and 986 to 1010 (GSDR…PSDS).

This sequence belongs to the retinoblastoma protein (RB) family.

Its subcellular location is the nucleus. Its function is as follows. Regulator of biological processes that recruits a histone deacetylase to control gene transcription. May play a role in the entry into mitosis, negatively regulating the cell proliferation. Formation of stable complexes with geminiviridae replication-associated proteins may create a cellular environment which favors viral DNA replication. In Zea mays (Maize), this protein is Retinoblastoma-related protein 3 (RBR3).